Here is a 1501-residue protein sequence, read N- to C-terminus: Protein SNQ2 (1501 aa).

Polar residues predominate over residues 1–17 (MSNIKSTQDSSHNAVAR). Residues 1 to 56 (MSNIKSTQDSSHNAVARSSSASFAASEESFTGITHDKDEQSDTPADKLTKMLTGPA) form a disordered region. Ser-2 carries the N-acetylserine modification. Over residues 18-30 (SSSASFAASEESF) the composition is skewed to low complexity. Phosphoserine occurs at positions 26 and 29. A compositionally biased stretch (basic and acidic residues) spans 34–49 (THDKDEQSDTPADKLT). Phosphoserine occurs at positions 64, 80, and 86. Positions 161–410 (FKGIKAKRHQ…FAKMGYLCPP (250 aa)) constitute an ABC transporter 1 domain. Asn-273, Asn-334, and Asn-518 each carry an N-linked (GlcNAc...) asparagine glycan. 5 helical membrane passes run 521 to 541 (YTVI…SLFY), 554 to 574 (GGVL…NISF), 600 to 620 (LASF…LFFL), 628 to 648 (GSFF…NGLF), and 664 to 680 (ISGI…TYMI). Asn-730 carries an N-linked (GlcNAc...) asparagine glycan. Residues 771–789 (FGILWCFLLGYVVLKVIFT) traverse the membrane as a helical segment. The ABC transporter 2 domain occupies 853–1095 (FIWKDVCFTI…ILNYFERNGA (243 aa)). Asn-874 carries an N-linked (GlcNAc...) asparagine glycan. 889 to 896 (GESGAGKT) lines the ATP pocket. At Thr-1153 the chain carries Phosphothreonine. 4 helical membrane-spanning segments follow: residues 1190–1212 (IMSK…FNVG), 1216–1236 (VGLQ…APAM), 1277–1296 (HLFF…RIFF), and 1333–1352 (ANVI…GVTQ). Residue Asn-1401 is glycosylated (N-linked (GlcNAc...) asparagine). A helical transmembrane segment spans residues 1455–1475 (FGIFWIYIFFNIIAMVCVYYL).

It belongs to the ABC transporter superfamily. ABCG family. PDR (TC 3.A.1.205) subfamily.

The protein resides in the membrane. Could be an ATP-dependent permease. Confers hyper-resistance to the mutagens 4-nitroquinoline-N-oxide (4-NQO) and triaziquone, as well as to the chemicals sulphomethuron methyl phenanthroline when present in multiple copies. Exhibits nucleoside triphosphatase activity. This chain is Protein SNQ2 (SNQ2), found in Saccharomyces cerevisiae (strain ATCC 204508 / S288c) (Baker's yeast).